An 834-amino-acid chain; its full sequence is RNA-binding protein 12B-B (834 aa).

The 76-residue stretch at 154–229 folds into the RRM 1 domain; sequence PYLFLRGLPY…RFIEVMQGSE (76 aa). Positions 237-277 are disordered; sequence GTATEGGDTPRMRSEEHSPSRRINGRHFRKRSHSKSPRARS. The span at 244–255 shows a compositional bias: basic and acidic residues; the sequence is DTPRMRSEEHSP. Residues 259–277 are compositionally biased toward basic residues; the sequence is INGRHFRKRSHSKSPRARS. RRM domains follow at residues 283–359 and 401–478; these read FYVH…PVSR and LCIY…LISE. Disordered stretches follow at residues 546–572 and 621–643; these read GYFR…PWEE and HFRR…RSRE. Residues 550-572 are compositionally biased toward basic and acidic residues; the sequence is QSDRCSPEDFRHSPEDYRHPWEE. The residue at position 701 (S701) is a Phosphoserine. Residues 758–834 enclose the RRM 4 domain; it reads IRVMISNLPF…GPRKVKLSLL (77 aa).

This chain is RNA-binding protein 12B-B (Rbm12b2), found in Mus musculus (Mouse).